A 144-amino-acid polypeptide reads, in one-letter code: 3-hydroxyacyl-[acyl-carrier-protein] dehydratase FabZ (144 aa).

The active site involves His-51.

Belongs to the thioester dehydratase family. FabZ subfamily.

It is found in the cytoplasm. It catalyses the reaction a (3R)-hydroxyacyl-[ACP] = a (2E)-enoyl-[ACP] + H2O. Involved in unsaturated fatty acids biosynthesis. Catalyzes the dehydration of short chain beta-hydroxyacyl-ACPs and long chain saturated and unsaturated beta-hydroxyacyl-ACPs. This is 3-hydroxyacyl-[acyl-carrier-protein] dehydratase FabZ from Clostridium botulinum (strain 657 / Type Ba4).